Consider the following 311-residue polypeptide: Putative mitochondrial transporter UCP3 (311 aa).

Topologically, residues 1 to 10 are mitochondrial intermembrane; it reads MVGLQPSERP. Residues 11–32 traverse the membrane as a helical segment; the sequence is PTTSVKFLAAGTAACFADLLTF. Solcar repeat units follow at residues 11–105, 114–205, and 214–299; these read PTTS…VKQF, SSII…IKEK, and DNFP…MKRA. Residues 33–76 lie on the Mitochondrial matrix side of the membrane; sequence PLDTAKVRLQIQGENQAALAARSAQYRGVLGTILTMVRTEGPRS. A helical transmembrane segment spans residues 77–99; it reads LYSGLVAGLQRQMSFASIRIGLY. The Mitochondrial intermembrane segment spans residues 100-119; sequence DSVKQFYTPKGSDHSSIITR. A helical membrane pass occupies residues 120-136; sequence ILAGCTTGAMAVTCAQP. Over 137 to 182 the chain is Mitochondrial matrix; it reads TDVVKIRFQASMHTGLGGNRKYSGTMDAYRTIAREEGVRGLWKGIL. The chain crosses the membrane as a helical span at residues 183–199; the sequence is PNITRNAIVNCGEMVTY. The Mitochondrial intermembrane segment spans residues 200–216; the sequence is DIIKEKLLDYHLLTDNF. A helical transmembrane segment spans residues 217-236; that stretch reads PCHFVSAFGAGFCATLVASP. Over 237-270 the chain is Mitochondrial matrix; the sequence is VDVVKTRYMNSPPGQYHSPFDCMLKMVTQEGPTA. A helical transmembrane segment spans residues 271–293; the sequence is FYKGFTPSFLRLGSWNVVMFVTY. Positions 278–300 are purine nucleotide binding; that stretch reads SFLRLGSWNVVMFVTYEQMKRAL. Topologically, residues 294–311 are mitochondrial intermembrane; that stretch reads EQMKRALMKVQMLRDSPF.

It belongs to the mitochondrial carrier (TC 2.A.29) family. Interacts with HAX1; the interaction is direct and calcium-dependent.

The protein resides in the mitochondrion inner membrane. Functionally, putative transmembrane transporter that plays a role in mitochondrial metabolism via an as yet unclear mechanism. Originally, this mitochondrial protein was thought to act as a proton transmembrane transporter from the mitochondrial intermembrane space into the matrix, causing proton leaks through the inner mitochondrial membrane, thereby uncoupling mitochondrial membrane potential generation from ATP synthesis. However, this function is controversial and uncoupling may not be the function, or at least not the main function, but rather a consequence of more conventional metabolite transporter activity. The chain is Putative mitochondrial transporter UCP3 from Bos taurus (Bovine).